Reading from the N-terminus, the 89-residue chain is UPF0335 protein RPE_4107 (89 aa).

This sequence belongs to the UPF0335 family.

This Rhodopseudomonas palustris (strain BisA53) protein is UPF0335 protein RPE_4107.